We begin with the raw amino-acid sequence, 401 residues long: E3 ubiquitin-protein ligase RGLG4 (401 aa).

Residues 1–43 form a disordered region; the sequence is MTMGNFLKRFGSGKSRSSRNMTLGTTSSQSHEPSPSDPSLSLA. Over residues 8-19 the composition is skewed to low complexity; the sequence is KRFGSGKSRSSR. The span at 20–32 shows a compositional bias: polar residues; that stretch reads NMTLGTTSSQSHE. Residues 79-299 form the VWFA domain; it reads NLILGVDFTK…KETAFALAAL (221 aa). Positions 326-350 are disordered; the sequence is VPRPPPIPYTPPTNAELPSTASPAS. A compositionally biased stretch (pro residues) spans 327–336; the sequence is PRPPPIPYTP. The segment covering 341 to 350 has biased composition (polar residues); the sequence is ELPSTASPAS. An RING-type zinc finger spans residues 357-390; the sequence is CPICLTNRKDVAFSCGHMTCGDCGSKISNCPICR.

Interacts with UBC30, GRXS17 and GLB3. As to expression, widely expressed.

It localises to the cytoplasm. The protein resides in the nucleus. It carries out the reaction S-ubiquitinyl-[E2 ubiquitin-conjugating enzyme]-L-cysteine + [acceptor protein]-L-lysine = [E2 ubiquitin-conjugating enzyme]-L-cysteine + N(6)-ubiquitinyl-[acceptor protein]-L-lysine.. Its function is as follows. Possesses E3 ubiquitin-protein ligase in vitro. Acts as upstream modulator of jasmonate (JA) signaling in response to various stimuli, such as JA-inhibited root growth, JA-inductive gene expression, coronatine-mediated pathogen susceptibility, wound-stimulated expression of JA-responsive genes and wound-induced JA biosynthesis. Controls fumonisin B1 (FB1)-triggered programmed cell death (PCD) by modulating the JA signaling pathway. May mediate salicylic acid (SA) suppression of JA signaling in FB1-induced responses. May mediate the formation of 'Lys-48'-linked multiubiquitin chains. Mediates the polyubiquitination and subsequent proteasomal degradation of the target protein GRXS17. In Arabidopsis thaliana (Mouse-ear cress), this protein is E3 ubiquitin-protein ligase RGLG4.